A 359-amino-acid polypeptide reads, in one-letter code: DNA replication and repair protein RecF (359 aa).

30 to 37 (GNNGSGKT) is an ATP binding site.

Belongs to the RecF family.

It is found in the cytoplasm. In terms of biological role, the RecF protein is involved in DNA metabolism; it is required for DNA replication and normal SOS inducibility. RecF binds preferentially to single-stranded, linear DNA. It also seems to bind ATP. This chain is DNA replication and repair protein RecF, found in Haemophilus influenzae (strain 86-028NP).